We begin with the raw amino-acid sequence, 257 residues long: Neurotrophin-3 (257 aa).

Residues 1 to 18 (MSILFYVIFLAYLRGIQG) form the signal peptide. Residues 19 to 138 (NNMDQRSLPE…VANRTSRRKR (120 aa)) constitute a propeptide that is removed on maturation. The disordered stretch occupies residues 61 to 81 (STLPKAEAPREPERGGPAKSA). A compositionally biased stretch (basic and acidic residues) spans 67–76 (EAPREPERGG). Asn131 is a glycosylation site (N-linked (GlcNAc...) asparagine). 3 disulfide bridges follow: Cys152-Cys217, Cys195-Cys246, and Cys205-Cys248.

The protein belongs to the NGF-beta family. In terms of tissue distribution, brain and peripheral tissues.

The protein localises to the secreted. Functionally, seems to promote the survival of visceral and proprioceptive sensory neurons. The sequence is that of Neurotrophin-3 (NTF3) from Homo sapiens (Human).